Consider the following 205-residue polypeptide: High frequency lysogenization protein HflD homolog (205 aa).

Belongs to the HflD family.

Its subcellular location is the cytoplasm. The protein resides in the cell inner membrane. This Shewanella pealeana (strain ATCC 700345 / ANG-SQ1) protein is High frequency lysogenization protein HflD homolog.